A 470-amino-acid chain; its full sequence is Glutamate--tRNA ligase (470 aa).

Residues 9 to 19 (PSPTGFLHVGG) carry the 'HIGH' region motif. A 'KMSKS' region motif is present at residues 236-240 (RLSKR). Residue Lys-239 coordinates ATP.

This sequence belongs to the class-I aminoacyl-tRNA synthetase family. Glutamate--tRNA ligase type 1 subfamily. Monomer.

It localises to the cytoplasm. The enzyme catalyses tRNA(Glu) + L-glutamate + ATP = L-glutamyl-tRNA(Glu) + AMP + diphosphate. Catalyzes the attachment of glutamate to tRNA(Glu) in a two-step reaction: glutamate is first activated by ATP to form Glu-AMP and then transferred to the acceptor end of tRNA(Glu). The protein is Glutamate--tRNA ligase of Legionella pneumophila (strain Corby).